Reading from the N-terminus, the 132-residue chain is CLAVATA3/ESR (CLE)-related protein 2-B (132 aa).

The first 26 residues, 1–26 (MASRMGMVAILSLFVCALVASTSVNA), serve as a signal peptide directing secretion. The segment at 68-132 (NRASKQLDRE…IGPPPFLDRY (65 aa)) is disordered. A hydroxyproline mark is found at P82 and P85. P85 is a glycosylation site (O-linked (Ara...) hydroxyproline).

This sequence belongs to the CLV3/ESR signal peptide family. In terms of processing, the O-glycosylation (arabinosylation) of the hydroxyproline Pro-85 enhances binding affinity of the ESR2Bp peptide for its receptor. In terms of tissue distribution, seed endosperm.

It localises to the secreted. The protein localises to the extracellular space. In terms of biological role, extracellular signal peptide that regulates cell fate. The sequence is that of CLAVATA3/ESR (CLE)-related protein 2-B from Zea mays (Maize).